A 100-amino-acid chain; its full sequence is Integration host factor subunit beta (100 aa).

The disordered stretch occupies residues 53–100 (LHHRPPRIGRNPKTGEPVALPGKYVPHFKPGKELRDRVNAGRHNPIQS). A compositionally biased stretch (basic and acidic residues) spans 82–91 (PGKELRDRVN).

It belongs to the bacterial histone-like protein family. In terms of assembly, heterodimer of an alpha and a beta chain.

Its function is as follows. This protein is one of the two subunits of integration host factor, a specific DNA-binding protein that functions in genetic recombination as well as in transcriptional and translational control. The chain is Integration host factor subunit beta from Alkalilimnicola ehrlichii (strain ATCC BAA-1101 / DSM 17681 / MLHE-1).